Consider the following 564-residue polypeptide: Asparagine synthetase domain-containing protein CG17486 (564 aa).

The active-site Nucleophile is Cys2. In terms of domain architecture, Glutamine amidotransferase type-2 spans 2–180; that stretch reads CGIFCSVVNN…PLGLFRVKLN (179 aa). The region spanning 280–541 is the Asparagine synthetase domain; that stretch reads PFCRLCMQKL…GLRDVVFLKK (262 aa).

The polypeptide is Asparagine synthetase domain-containing protein CG17486 (Drosophila melanogaster (Fruit fly)).